A 374-amino-acid polypeptide reads, in one-letter code: Guanine nucleotide-binding protein subunit alpha-15 (374 aa).

The region spanning Gly-41–Leu-374 is the G-alpha domain. The G1 motif stretch occupies residues Lys-44–Thr-57. GTP-binding positions include Gly-49–Ser-56, Leu-183–Thr-189, Asp-208–Gln-212, Asn-277–Asp-280, and Ala-346. 2 residues coordinate Mg(2+): Ser-56 and Thr-189. The G2 motif stretch occupies residues Asp-181–Thr-189. Residues Leu-204–Lys-213 form a G3 motif region. The interval Ile-273–Asp-280 is G4 motif. Positions Thr-344 to Thr-349 are G5 motif.

It belongs to the G-alpha family. G(q) subfamily. As to quaternary structure, g proteins are composed of 3 units; alpha, beta and gamma. The alpha chain contains the guanine nucleotide binding site.

Functionally, guanine nucleotide-binding proteins (G proteins) are involved as modulators or transducers in various transmembrane signaling systems. The chain is Guanine nucleotide-binding protein subunit alpha-15 (Gna15) from Rattus norvegicus (Rat).